The following is a 576-amino-acid chain: Keratin, type II cytoskeletal 5 (576 aa).

Positions 1–163 are head; it reads MSRQSSVSFR…DPTIQRVRTE (163 aa). Phosphoserine is present on residues serine 5, serine 8, serine 16, and serine 21. The residue at position 24 (threonine 24) is a Phosphothreonine; by CDK1. Serine 26, serine 36, serine 46, serine 60, serine 67, serine 71, serine 74, and serine 78 each carry phosphoserine. A Phosphothreonine; by CDK1 modification is found at threonine 147. Residue threonine 162 is modified to Phosphothreonine; by AURKB. A coil 1A region spans residues 164 to 199; that stretch reads EREQIKTLNNKFASFIDKVRFLEQQNKVLDTKWTLL. The region spanning 164 to 477 is the IF rod domain; it reads EREQIKTLNN…KLLEGEECRL (314 aa). Residues 200-218 form a linker 1 region; it reads QEQGTKTIKQNLDPLFEQY. Residues 219–311 are coil 1B; sequence INNLRRQLDG…FFDAELSQMQ (93 aa). The segment at 312-334 is linker 12; sequence THVSDTSVVLSMDNNRSLDLDSI. The interval 335–473 is coil 2; sequence IAEVKAQYED…ATYRKLLEGE (139 aa). A tail region spans residues 474–576; it reads ECRLSGEGVG…TSSSRRSFKS (103 aa). Position 527 is an omega-N-methylarginine (arginine 527). Residues 540 to 557 show a composition bias toward gly residues; that stretch reads GFSASSGQGGGFSSGGGS. The segment at 540-576 is disordered; it reads GFSASSGQGGGFSSGGGSSSSVKFVSTTSSSRRSFKS. Residues 558–576 are compositionally biased toward low complexity; that stretch reads SSSVKFVSTTSSSRRSFKS.

It belongs to the intermediate filament family. As to quaternary structure, heterodimer of a type I and a type II keratin. Heterodimer with type I keratin KRT25 leading to the formation of keratin intermediate filament (KIF) network. Forms a heterodimer (via 2B domains) with KRT14 (via 2B domains). Interacts with TCHP. Interacts with EPPK1. Interacts with AMELX. Interacts with PKP1 (via N-terminus) and PKP2. In terms of processing, phosphorylated by CDK1, AURKB and Rho-kinase, phosphorylation is regulated by the cell cycle. Thr-24 phosphorylation, mediated by CDK1, peaks during prometaphase or metaphase cells with phosphorylated filamentous structures evident throughout the cytoplasm during early mitosis. CDK1 phosphorylates Thr-24 in mitotic cells at the site of injury. O-glycosylated. Expressed in the epidermis (at protein level) and testis (within pachytene spermatocytes).

Its subcellular location is the cytoplasm. Functionally, required for the formation of keratin intermediate filaments in the basal epidermis and maintenance of the skin barrier in response to mechanical stress. Regulates the recruitment of Langerhans cells to the epidermis, potentially by modulation of the abundance of macrophage chemotactic cytokines, macrophage inflammatory cytokines and CTNND1 localization in keratinocytes. The chain is Keratin, type II cytoskeletal 5 from Rattus norvegicus (Rat).